Reading from the N-terminus, the 1008-residue chain is MIYEMMVMKRSANSRAQNNRRSERQRYYPYEPTESPSRPVSSLGNVPTIPPPAASTVDVPHYTSRPGSPTRPWSPNRVGNWARPPAPPSVASSQYERADLNGSPRPGTPSSRYGGSPRRPLPPAPLFSAPGGHDANIPINDAGDDDVFGGGGRTIDPNNRASMQSFMSESTIITDEKDAMSKVDLDDEMEETDEMVDPNIHYGPAPEKQSRRGVREAQMSTKEVQLINGELILECKIPTILHSFLPRRDDREFTHMRYTAVTCDPDDFTQRGYKLRQQIGSTMRETELLICITMYNEDEIGFTRTMHGVMQNITHLCSRSKSRTWGKDGWKKIVVCIIADGRKKVHPRTLNALAALGVYQEGIAKNVVNQKQVNAHVYEYTTQVSLDPDLKFKGAEKGIMPCQVLFCLKEHNKKKLNSHRWFFNAFGRALQPNICILLDVGTKPAPTALYHLWKAFDQNSNVAGAAGEIKAGKGKGMLGLLNPLVASQNFEYKMSNILDKPLESVFGYITVLPGALSAYRFFALQNDAEGNGPLNQYFKGETLHGQDADVFTANMYLAEDRILCWELVAKREERWVLKFVKSAVGETDVPDSIPEFISQRRRWLNGAFFAAVYSIVNAKQLWKTDHSLPRKILLQIEGAYQFMQLIFTYFGLANFYLVFYFIAGSLTDDKIDPFGHHIGKYIFVILRYACILVMCLQFIISMGNRPQGAKKLYLSGIIVYSIIMFYTIFCTMYLVVIEILARTGADTSLEVSDGLFVNIVMSLLSTVGLYFYASFLYLDPWHMFTSSAAYFIMLPSYICTLQVYAFCNTHDVSWGTKGDNVLNMDLGAARVVNGTTVQIEMPSEQLDIDSGYDAALRNLRDRVEVPETPITESQMQEDYYRAVRTYMVSIWMVANVILAMAISEVYGPDAGGTNIYLAIILWSVVVLALIRVIGSTTYAILLVVQKIVEGKTKFDAGNLANMSHVSGSSGGRSSTALKYGGGVSFKDKFAEAKWSAKRVAGKAMFWRK.

A disordered region spans residues 1–160 (MIYEMMVMKR…GGRTIDPNNR (160 aa)). Positions 10 to 19 (RSANSRAQNN) are enriched in low complexity. Residues 34–45 (ESPSRPVSSLGN) are compositionally biased toward polar residues. A glycan (N-linked (GlcNAc...) asparagine) is linked at Asn-312. 5 consecutive transmembrane segments (helical) span residues 642–662 (FMQL…FYFI), 682–702 (IFVI…IISM), 717–737 (IIVY…LVVI), 755–775 (LFVN…YASF), and 787–807 (SAAY…YAFC). Asn-833 is a glycosylation site (N-linked (GlcNAc...) asparagine). Helical transmembrane passes span 887–907 (MVSI…EVYG) and 910–930 (AGGT…LALI). Asn-961 carries N-linked (GlcNAc...) asparagine glycosylation.

Belongs to the chitin synthase family. Class II subfamily.

Its subcellular location is the cell membrane. The catalysed reaction is [(1-&gt;4)-N-acetyl-beta-D-glucosaminyl](n) + UDP-N-acetyl-alpha-D-glucosamine = [(1-&gt;4)-N-acetyl-beta-D-glucosaminyl](n+1) + UDP + H(+). Its function is as follows. Polymerizes chitin, a structural polymer of the cell wall and septum, by transferring the sugar moiety of UDP-GlcNAc to the non-reducing end of the growing chitin polymer. Involved in cell wall integrity and mycelial morphology. Plays an important role in septal growth or maintenance. Acts as a positive regulator of conidiation, cellular responses to oxidative stresses, and the production of malic acid. Negatively regulates the citric acid production. This chain is Chitin synthase C, found in Aspergillus niger (strain ATCC MYA-4892 / CBS 513.88 / FGSC A1513).